Reading from the N-terminus, the 748-residue chain is Polyribonucleotide nucleotidyltransferase (748 aa).

Mg(2+) contacts are provided by Asp522 and Asp528. One can recognise a KH domain in the interval 588 to 647 (PRVTTIRVPVDKIGEVIGPKGKIINAITEETGAQISIEDDGTVFVGATDGPSAQAAIDRI). The S1 motif domain occupies 659 to 728 (GERFLGTVVK…KRGKISLVLV (70 aa)).

The protein belongs to the polyribonucleotide nucleotidyltransferase family. Mg(2+) serves as cofactor.

It is found in the cytoplasm. It carries out the reaction RNA(n+1) + phosphate = RNA(n) + a ribonucleoside 5'-diphosphate. Its function is as follows. Involved in mRNA degradation. Catalyzes the phosphorolysis of single-stranded polyribonucleotides processively in the 3'- to 5'-direction. The polypeptide is Polyribonucleotide nucleotidyltransferase (Mycobacterium avium (strain 104)).